The chain runs to 260 residues: Sodium channel modifier 1 (260 aa).

The Bipartite nuclear localization signal motif lies at 4 to 20 (KRDGDDSSQLNVLKKRR). The segment at 42-74 (YACTVCHHRPVFNTIDMLSVHRTGKKHLGGLQR) adopts a Matrin-type zinc-finger fold. The segment at 143–260 (RNVYDPHSGP…EEEPPALPPS (118 aa)) is disordered. The segment covering 166-187 (PGPSQPHTSLHSPPTGPCSSPT) has biased composition (polar residues). The segment covering 202-221 (KGEEKFRKEIADPERERNME) has biased composition (basic and acidic residues). Over residues 245–254 (VEFDSDEEEP) the composition is skewed to acidic residues.

Component of the minor spliceosome, which splices U12-type introns.

It is found in the nucleus. The protein resides in the nucleoplasm. It localises to the nucleus speckle. Functionally, as a component of the minor spliceosome, involved in the splicing of U12-type introns in pre-mRNAs. The polypeptide is Sodium channel modifier 1 (scnm1) (Xenopus laevis (African clawed frog)).